A 459-amino-acid polypeptide reads, in one-letter code: Limonoid 7-O-acetyltransferse (459 aa).

Residues histidine 167 and aspartate 391 each act as proton acceptor in the active site.

It belongs to the plant acyltransferase family. Monomer. As to expression, expressed in maturing fruits and in juice vesicles.

The enzyme catalyses (1S)-1-acetoxy-luvungin A + acetyl-CoA = (1S)-1,7-diacetoxy-luvungin A + CoA. It participates in secondary metabolite biosynthesis; terpenoid biosynthesis. In terms of biological role, acetyltransferase involved in the biosynthesis of limonoids triterpene natural products such as limonin, a compound with insecticidal activity responsible for the bitter taste in citrus. Catalyzes the formation of (1S)-1,7-diacetoxy-luvungin A from (1S)-1-acetoxy-luvungin A. This Citrus sinensis (Sweet orange) protein is Limonoid 7-O-acetyltransferse.